Consider the following 341-residue polypeptide: Holliday junction branch migration complex subunit RuvB (341 aa).

The tract at residues 1 to 180 is large ATPase domain (RuvB-L); sequence MAKSHTLNPE…FGIQLRLDYY (180 aa). Leu-19, Arg-20, Gly-61, Lys-64, Thr-65, Thr-66, Arg-170, Tyr-180, and Arg-217 together coordinate ATP. Thr-65 contributes to the Mg(2+) binding site. Residues 181–251 are small ATPAse domain (RuvB-S); it reads NDEEMKEIVL…LCLKAFEKMG (71 aa). A head domain (RuvB-H) region spans residues 254 to 341; it reads DLGLDGMDRQ…ENHGQDPTLF (88 aa). The DNA site is built by Arg-309 and Arg-314.

This sequence belongs to the RuvB family. As to quaternary structure, homohexamer. Forms an RuvA(8)-RuvB(12)-Holliday junction (HJ) complex. HJ DNA is sandwiched between 2 RuvA tetramers; dsDNA enters through RuvA and exits via RuvB. An RuvB hexamer assembles on each DNA strand where it exits the tetramer. Each RuvB hexamer is contacted by two RuvA subunits (via domain III) on 2 adjacent RuvB subunits; this complex drives branch migration. In the full resolvosome a probable DNA-RuvA(4)-RuvB(12)-RuvC(2) complex forms which resolves the HJ.

It is found in the cytoplasm. It carries out the reaction ATP + H2O = ADP + phosphate + H(+). Its function is as follows. The RuvA-RuvB-RuvC complex processes Holliday junction (HJ) DNA during genetic recombination and DNA repair, while the RuvA-RuvB complex plays an important role in the rescue of blocked DNA replication forks via replication fork reversal (RFR). RuvA specifically binds to HJ cruciform DNA, conferring on it an open structure. The RuvB hexamer acts as an ATP-dependent pump, pulling dsDNA into and through the RuvAB complex. RuvB forms 2 homohexamers on either side of HJ DNA bound by 1 or 2 RuvA tetramers; 4 subunits per hexamer contact DNA at a time. Coordinated motions by a converter formed by DNA-disengaged RuvB subunits stimulates ATP hydrolysis and nucleotide exchange. Immobilization of the converter enables RuvB to convert the ATP-contained energy into a lever motion, pulling 2 nucleotides of DNA out of the RuvA tetramer per ATP hydrolyzed, thus driving DNA branch migration. The RuvB motors rotate together with the DNA substrate, which together with the progressing nucleotide cycle form the mechanistic basis for DNA recombination by continuous HJ branch migration. Branch migration allows RuvC to scan DNA until it finds its consensus sequence, where it cleaves and resolves cruciform DNA. The protein is Holliday junction branch migration complex subunit RuvB of Leptospira borgpetersenii serovar Hardjo-bovis (strain JB197).